The sequence spans 404 residues: Glucose-1-phosphate adenylyltransferase (404 aa).

Residues Tyr99, Gly164, 179–180 (EK), and Ser197 each bind alpha-D-glucose 1-phosphate.

Belongs to the bacterial/plant glucose-1-phosphate adenylyltransferase family.

It carries out the reaction alpha-D-glucose 1-phosphate + ATP + H(+) = ADP-alpha-D-glucose + diphosphate. The protein operates within capsule biogenesis; capsule polysaccharide biosynthesis. It functions in the pathway glycan biosynthesis; glycogen biosynthesis. Functionally, involved in the biosynthesis of ADP-glucose, a building block, required in the biosynthesis of maltose-1-phosphate (M1P) and in the elongation reactions to produce linear alpha-1,4-glucans. Catalyzes the reaction between ATP and alpha-D-glucose 1-phosphate (G1P) to produce pyrophosphate and ADP-Glc. This Mycobacteroides abscessus (strain ATCC 19977 / DSM 44196 / CCUG 20993 / CIP 104536 / JCM 13569 / NCTC 13031 / TMC 1543 / L948) (Mycobacterium abscessus) protein is Glucose-1-phosphate adenylyltransferase.